A 253-amino-acid chain; its full sequence is Phosphate import ATP-binding protein PstB (253 aa).

The ABC transporter domain maps to 5–248; it reads IETVNLNVYY…PEHELTEKYV (244 aa). 37–44 is an ATP binding site; that stretch reads GPSGCGKS.

It belongs to the ABC transporter superfamily. Phosphate importer (TC 3.A.1.7) family. As to quaternary structure, the complex is composed of two ATP-binding proteins (PstB), two transmembrane proteins (PstC and PstA) and a solute-binding protein (PstS).

It is found in the cell membrane. It catalyses the reaction phosphate(out) + ATP + H2O = ADP + 2 phosphate(in) + H(+). In terms of biological role, part of the ABC transporter complex PstSACB involved in phosphate import. Responsible for energy coupling to the transport system. This Thermococcus kodakarensis (strain ATCC BAA-918 / JCM 12380 / KOD1) (Pyrococcus kodakaraensis (strain KOD1)) protein is Phosphate import ATP-binding protein PstB.